The following is a 365-amino-acid chain: tRNA N6-adenosine threonylcarbamoyltransferase (365 aa).

Residues histidine 111 and histidine 115 each coordinate Fe cation. Substrate-binding positions include 140–144 (IVSGG), aspartate 173, glycine 186, and asparagine 298. Aspartate 323 contributes to the Fe cation binding site.

The protein belongs to the KAE1 / TsaD family. Fe(2+) serves as cofactor.

Its subcellular location is the cytoplasm. It catalyses the reaction L-threonylcarbamoyladenylate + adenosine(37) in tRNA = N(6)-L-threonylcarbamoyladenosine(37) in tRNA + AMP + H(+). Its function is as follows. Required for the formation of a threonylcarbamoyl group on adenosine at position 37 (t(6)A37) in tRNAs that read codons beginning with adenine. Is involved in the transfer of the threonylcarbamoyl moiety of threonylcarbamoyl-AMP (TC-AMP) to the N6 group of A37, together with TsaE and TsaB. TsaD likely plays a direct catalytic role in this reaction. The sequence is that of tRNA N6-adenosine threonylcarbamoyltransferase from Thermomicrobium roseum (strain ATCC 27502 / DSM 5159 / P-2).